The sequence spans 396 residues: Putative N(4)-(beta-N-acetylglucosaminyl)-L-asparaginase GE19290 (396 aa).

A signal peptide spans 1-23 (MKRHLKACLWVLCFASTALSSLA). 2 cysteine pairs are disulfide-bonded: Cys100–Cys105 and Cys199–Cys215. The active-site Nucleophile is the Thr246. Substrate contacts are provided by residues 274–277 (RVGD) and 297–300 (TGDG). A disulfide bridge links Cys357 with Cys384.

Belongs to the Ntn-hydrolase family. Heterotetramer of two alpha and two beta chains arranged as a dimer of alpha/beta heterodimers. Cleaved into an alpha and beta chain by autocatalysis; this activates the enzyme. The N-terminal residue of the beta subunit is responsible for the nucleophile hydrolase activity.

It carries out the reaction N(4)-(beta-N-acetyl-D-glucosaminyl)-L-asparagine + H2O = N-acetyl-beta-D-glucosaminylamine + L-aspartate + H(+). Its function is as follows. Cleaves the GlcNAc-Asn bond which joins oligosaccharides to the peptide of asparagine-linked glycoproteins. The chain is Putative N(4)-(beta-N-acetylglucosaminyl)-L-asparaginase GE19290 from Drosophila yakuba (Fruit fly).